A 144-amino-acid chain; its full sequence is Large-conductance mechanosensitive channel (144 aa).

Transmembrane regions (helical) follow at residues 16-36 and 86-106; these read VIDL…VDSV and GNFL…FMMV.

It belongs to the MscL family. Homopentamer.

It is found in the cell inner membrane. In terms of biological role, channel that opens in response to stretch forces in the membrane lipid bilayer. May participate in the regulation of osmotic pressure changes within the cell. This Cupriavidus metallidurans (strain ATCC 43123 / DSM 2839 / NBRC 102507 / CH34) (Ralstonia metallidurans) protein is Large-conductance mechanosensitive channel.